The sequence spans 261 residues: Kallikrein-2 (261 aa).

The N-terminal stretch at 1–18 (MWDLVLSIALSVGCTGAV) is a signal peptide. The propeptide at 19 to 24 (PLIQSR) is activation peptide. One can recognise a Peptidase S1 domain in the interval 25 to 258 (IVGGWECEKH…YRKWIKDTIA (234 aa)). Cystine bridges form between cysteine 31–cysteine 173, cysteine 50–cysteine 66, cysteine 152–cysteine 219, cysteine 184–cysteine 198, and cysteine 209–cysteine 234. Residue histidine 65 is the Charge relay system of the active site. N-linked (GlcNAc...) asparagine glycosylation is present at asparagine 102. Aspartate 120 functions as the Charge relay system in the catalytic mechanism. Serine 213 acts as the Charge relay system in catalysis.

This sequence belongs to the peptidase S1 family. Kallikrein subfamily.

The enzyme catalyses Preferential cleavage of Arg-|-Xaa bonds in small molecule substrates. Highly selective action to release kallidin (lysyl-bradykinin) from kininogen involves hydrolysis of Met-|-Xaa or Leu-|-Xaa.. In terms of biological role, glandular kallikreins cleave Met-Lys and Arg-Ser bonds in kininogen to release Lys-bradykinin. This chain is Kallikrein-2 (KLK2), found in Homo sapiens (Human).